The following is a 2442-amino-acid chain: Histone lysine acetyltransferase CREBBP (2442 aa).

Disordered regions lie at residues M1–L40 and R74–S168. A2 carries the post-translational modification N-acetylalanine. A compositionally biased stretch (polar residues) spans P20–F30. S120 is modified (phosphoserine). The segment covering G125–S168 has biased composition (polar residues). R219 bears the Omega-N-methylarginine mark. The interaction with SRCAP stretch occupies residues P226 to A409. The span at G261–T272 shows a compositional bias: low complexity. A disordered region spans residues G261–T290. A compositionally biased stretch (polar residues) spans S273–G284. The TAZ-type 1 zinc finger occupies D346–L432. Zn(2+)-binding residues include H362, C366, C379, C384, H393, C397, C403, C408, H417, C421, C426, and C429. The KIX domain occupies G586–E665. Asymmetric dimethylarginine is present on residues R600 and R624. K656 bears the N6-acetyllysine mark. Over residues F792–Q825 the composition is skewed to polar residues. Positions F792–K1084 are disordered. Composition is skewed to pro residues over residues P846–A862 and P874–P887. Residues V894–S906 show a composition bias toward polar residues. Composition is skewed to low complexity over residues S909–Q930 and P938–P957. A compositionally biased stretch (polar residues) spans P974–P989. K999 is covalently cross-linked (Glycyl lysine isopeptide (Lys-Gly) (interchain with G-Cter in SUMO1)). Basic and acidic residues predominate over residues A1012–M1022. K1015 is subject to N6-acetyllysine. S1031 carries the post-translational modification Phosphoserine. A compositionally biased stretch (basic and acidic residues) spans V1033–A1060. Residues K1034 and K1057 each participate in a glycyl lysine isopeptide (Lys-Gly) (interchain with G-Cter in SUMO1) cross-link. Positions S1067–Q1080 are enriched in polar residues. S1077 carries the post-translational modification Phosphoserine. The 108-residue stretch at F1086 to V1193 folds into the Bromo domain. The interaction with histone stretch occupies residues D1125 to K1171. The interaction with ASF1A stretch occupies residues N1163–K1181. An N6-acetyllysine modification is found at K1217. One can recognise a CBP/p300-type HAT domain in the interval K1324–Q1701. A phosphoserine; by IKKA mark is found at S1383 and S1387. The interaction with histone stretch occupies residues Y1434–D1436. Acetyl-CoA-binding positions include L1435 to S1437, R1447 to T1448, I1494, R1499, and W1503. The stretch at N1548–T1575 forms a coiled coil. Residues L1557 to S1569 show a composition bias toward basic and acidic residues. The segment at L1557–N1616 is disordered. Residues K1584, K1592, K1593, K1596, and K1598 each carry the N6-acetyllysine modification. Over residues A1586–K1596 the composition is skewed to basic residues. Residues R1703–D1751 form a ZZ-type zinc finger. Residues C1708, C1711, C1721, C1724, C1730, C1733, H1739, and H1741 each contribute to the Zn(2+) site. K1742 and K1745 each carry N6-acetyllysine. S1764 carries the post-translational modification Phosphoserine. Residues Q1766–I1847 form a TAZ-type 2 zinc finger. A disordered region spans residues T1875–A1960. 2 stretches are compositionally biased toward pro residues: residues P1901–S1913 and P1944–A1955. Phosphoserine occurs at positions 2064, 2077, and 2080. The tract at residues N2112–S2421 is disordered. 4 stretches are compositionally biased toward low complexity: residues Q2113 to P2138, Q2197 to Q2217, M2261 to G2280, and I2287 to I2305. 2 stretches are compositionally biased toward polar residues: residues S2315–A2327 and Q2334–V2343. The span at V2349–S2372 shows a compositional bias: pro residues. At S2351 the chain carries Phosphoserine. A compositionally biased stretch (polar residues) spans Q2411–S2421.

Part of a complex composed of MSX3, CREBBP/CBP AND EP300/p300; the interaction with MSX3 decreases histone acetylation activity. Found in a complex containing NCOA2; NCOA3; IKKA; IKKB and IKBKG. Probably part of a complex with HIF1A and EP300. Interacts with phosphorylated CREB1. Interacts with the C-terminal region of CITED4. The TAZ-type 1 domain interacts with HIF1A. Interacts with SRCAP, CARM1, ELF3, MLLT7/FOXO4, N4BP2, NCOA1, NCOA3, NCOA6, PCAF, DDX5, DDX17, PELP1, PML, SMAD1, SMAD2, SMAD3, SPIB, TRERF1 and ZCCHC12. Interacts with KLF1; the interaction results in acetylation and enhancement of transcriptional activity of KLF1. Interacts with DAXX; the interaction is dependent on CBP sumoylation and results in suppression of the transcriptional activity via recruitment of HDAC2 to DAXX. Interacts with MAF. Interacts with MTDH. Interacts with MAFG; the interaction acetylates MAFG in the basic region and stimulates NFE2 transcriptional activity through increasing its DNA-binding activity. Interacts with IRF2; the interaction acetylates IRF2 and regulates its activity on the H4 promoter. Interacts (via N-terminus) with SS18L1/CREST (via C-terminus). Interacts with IRF3 (when phosphorylated); forming the dsRNA-activated factor 1 (DRAF1), a complex which activates the transcription of the type I interferon genes. Interacts with MECOM. Interacts with CITED1 (via C-terminus) Interacts with GATA1; the interaction results in acetylation and enhancement of transcriptional activity of GATA1. Interacts with FOXO1; the interaction acetylates FOXO1 and inhibits its transcriptional activity. Interacts with NPAS2, CLOCK and BMAL1. Interacts with ASF1A and ASF1B; this promotes histone acetylation. Interacts with acetylated TP53/p53 and with the acetylated histones H3 and H4. Interacts (via transactivation domain and C-terminus) with PCNA; the interaction occurs on chromatin in UV-irradiated damaged cells. Interacts with DHX9 (via N-terminus); this interaction mediates association with RNA polymerase II holoenzyme and stimulates CREB-dependent transcriptional activation. Interacts with SMAD4; negatively regulated by ZBTB7A. Forms a complex with KMT2A and CREB1. Interacts with DDX3X; this interaction may facilitate HNF4A acetylation. Interacts with MSX1; the interaction may inhibit MSX1 autoinactivation. Interacts with MSX3. Interacts with ACSS2. Methylation of the KIX domain by CARM1 blocks association with CREB. This results in the blockade of CREB signaling, and in activation of apoptotic response. Post-translationally, phosphorylated by CHUK/IKKA at Ser-1383 and Ser-1387; these phosphorylations promote cell growth by switching the binding preference of CREBBP from TP53 to NF-kappa-B. In terms of processing, sumoylation negatively regulates transcriptional activity via the recruitment of DAAX. Autoacetylation is required for binding to protein substrates, such as acetylated histones and acetylated TP53/p53. Autoacetylation is induced by glucose and fatty acids. As to expression, expressed in hypothalamus and cortex.

The protein resides in the cytoplasm. The protein localises to the nucleus. It catalyses the reaction L-lysyl-[histone] + acetyl-CoA = N(6)-acetyl-L-lysyl-[histone] + CoA + H(+). The enzyme catalyses L-lysyl-[protein] + acetyl-CoA = N(6)-acetyl-L-lysyl-[protein] + CoA + H(+). It carries out the reaction (S)-lactoyl-CoA + L-lysyl-[protein] = N(6)-[(S)-lactoyl]-L-lysyl-[protein] + CoA + H(+). Acetylates histones, giving a specific tag for transcriptional activation. Mediates acetylation of histone H3 at 'Lys-18' and 'Lys-27' (H3K18ac and H3K27ac, respectively). Also acetylates non-histone proteins, like DDX21, FBL, IRF2, MAFG, NCOA3, POLR1E/PAF53 and FOXO1. Binds specifically to phosphorylated CREB and enhances its transcriptional activity toward cAMP-responsive genes. Acts as a coactivator of ALX1. Acts as a circadian transcriptional coactivator which enhances the activity of the circadian transcriptional activators: NPAS2-BMAL1 and CLOCK-BMAL1 heterodimers. Acetylates PCNA; acetylation promotes removal of chromatin-bound PCNA and its degradation during nucleotide excision repair (NER). Acetylates POLR1E/PAF53, leading to decreased association of RNA polymerase I with the rDNA promoter region and coding region. Acetylates DDX21, thereby inhibiting DDX21 helicase activity. Acetylates FBL, preventing methylation of 'Gln-105' of histone H2A (H2AQ104me). In addition to protein acetyltransferase, can use different acyl-CoA substrates, such as lactoyl-CoA, and is able to mediate protein lactylation. Catalyzes lactylation of MRE11 in response to DNA damage, thereby promoting DNA double-strand breaks (DSBs) via homologous recombination (HR). Functions as a transcriptional coactivator for SMAD4 in the TGF-beta signaling pathway. In Rattus norvegicus (Rat), this protein is Histone lysine acetyltransferase CREBBP (Crebbp).